The chain runs to 199 residues: Riboflavin synthase (199 aa).

Lumazine-binding repeat units follow at residues 1 to 95 (MFSG…IGGH) and 96 to 188 (FVSG…VDTI). Residues 4–6 (GII), 46–48 (CLT), 60–65 (DVTEET), 99–101 (GHV), Lys-130, 139–141 (SLT), and 153–158 (SLIPET) contribute to the 2,4-dihydroxypteridine site.

In terms of assembly, homotrimer.

It carries out the reaction 2 6,7-dimethyl-8-(1-D-ribityl)lumazine + H(+) = 5-amino-6-(D-ribitylamino)uracil + riboflavin. It functions in the pathway cofactor biosynthesis; riboflavin biosynthesis; riboflavin from 2-hydroxy-3-oxobutyl phosphate and 5-amino-6-(D-ribitylamino)uracil: step 2/2. Its function is as follows. Catalyzes the dismutation of two molecules of 6,7-dimethyl-8-ribityllumazine, resulting in the formation of riboflavin and 5-amino-6-(D-ribitylamino)uracil. This is Riboflavin synthase (ribE) from Chlamydia trachomatis serovar D (strain ATCC VR-885 / DSM 19411 / UW-3/Cx).